The sequence spans 230 residues: Ribosomal RNA small subunit methyltransferase Nep1 (230 aa).

S-adenosyl-L-methionine is bound by residues G184, G189, and 205-210 (IYNKPL).

This sequence belongs to the class IV-like SAM-binding methyltransferase superfamily. RNA methyltransferase NEP1 family. Homodimer.

The enzyme catalyses a pseudouridine in rRNA + S-adenosyl-L-methionine = an N(1)-methylpseudouridine in rRNA + S-adenosyl-L-homocysteine + H(+). Functionally, methyltransferase involved in ribosomal biogenesis. Specifically catalyzes the N1-methylation of the pseudouridine corresponding to position 914 in M.jannaschii 16S rRNA. In Staphylothermus marinus (strain ATCC 43588 / DSM 3639 / JCM 9404 / F1), this protein is Ribosomal RNA small subunit methyltransferase Nep1.